The following is a 154-amino-acid chain: Myoglobin (154 aa).

Positions 2-148 (VLSEGEWQLV…FRKDIAAKYK (147 aa)) constitute a Globin domain. The residue at position 4 (serine 4) is a Phosphoserine. Histidine 65 contacts nitrite. An O2-binding site is contributed by histidine 65. A Phosphothreonine modification is found at threonine 68. Histidine 94 lines the heme b pocket.

It belongs to the globin family. In terms of assembly, monomeric.

It localises to the cytoplasm. The protein localises to the sarcoplasm. The catalysed reaction is Fe(III)-heme b-[protein] + nitric oxide + H2O = Fe(II)-heme b-[protein] + nitrite + 2 H(+). It carries out the reaction H2O2 + AH2 = A + 2 H2O. Its function is as follows. Monomeric heme protein which primary function is to store oxygen and facilitate its diffusion within muscle tissues. Reversibly binds oxygen through a pentacoordinated heme iron and enables its timely and efficient release as needed during periods of heightened demand. Depending on the oxidative conditions of tissues and cells, and in addition to its ability to bind oxygen, it also has a nitrite reductase activity whereby it regulates the production of bioactive nitric oxide. Under stress conditions, like hypoxia and anoxia, it also protects cells against reactive oxygen species thanks to its pseudoperoxidase activity. The protein is Myoglobin (MB) of Kogia breviceps (Pygmy sperm whale).